A 626-amino-acid chain; its full sequence is DNA mismatch repair protein MutL (626 aa).

A disordered region spans residues 377 to 413; the sequence is EEPQAVKQPTQLWQPSTKPIIEEPIQEEKSWDSNEEG. Residues 383–393 show a composition bias toward polar residues; it reads KQPTQLWQPST.

Belongs to the DNA mismatch repair MutL/HexB family.

In terms of biological role, this protein is involved in the repair of mismatches in DNA. It is required for dam-dependent methyl-directed DNA mismatch repair. May act as a 'molecular matchmaker', a protein that promotes the formation of a stable complex between two or more DNA-binding proteins in an ATP-dependent manner without itself being part of a final effector complex. The sequence is that of DNA mismatch repair protein MutL from Bacillus anthracis (strain A0248).